Consider the following 70-residue polypeptide: DNA-directed RNA polymerase subunit omega (70 aa).

The protein belongs to the RNA polymerase subunit omega family. In terms of assembly, the RNAP catalytic core consists of 2 alpha, 1 beta, 1 beta' and 1 omega subunit. When a sigma factor is associated with the core the holoenzyme is formed, which can initiate transcription.

The enzyme catalyses RNA(n) + a ribonucleoside 5'-triphosphate = RNA(n+1) + diphosphate. Its function is as follows. Promotes RNA polymerase assembly. Latches the N- and C-terminal regions of the beta' subunit thereby facilitating its interaction with the beta and alpha subunits. The chain is DNA-directed RNA polymerase subunit omega from Bacillus cytotoxicus (strain DSM 22905 / CIP 110041 / 391-98 / NVH 391-98).